Reading from the N-terminus, the 196-residue chain is Peptidyl-tRNA hydrolase (196 aa).

Tyrosine 17 contributes to the tRNA binding site. Histidine 22 functions as the Proton acceptor in the catalytic mechanism. TRNA contacts are provided by phenylalanine 68, asparagine 70, and asparagine 116.

The protein belongs to the PTH family. Monomer.

It localises to the cytoplasm. The catalysed reaction is an N-acyl-L-alpha-aminoacyl-tRNA + H2O = an N-acyl-L-amino acid + a tRNA + H(+). Functionally, hydrolyzes ribosome-free peptidyl-tRNAs (with 1 or more amino acids incorporated), which drop off the ribosome during protein synthesis, or as a result of ribosome stalling. Its function is as follows. Catalyzes the release of premature peptidyl moieties from peptidyl-tRNA molecules trapped in stalled 50S ribosomal subunits, and thus maintains levels of free tRNAs and 50S ribosomes. This is Peptidyl-tRNA hydrolase from Yersinia pestis bv. Antiqua (strain Antiqua).